The sequence spans 242 residues: EFLNSSVKIVNPIMGVKFWDENVRIPAEEVTVRFERGHPVALNGQTFSDDVELLLEANRIGGRHGLGMSDQIENRIIEAKSRGIYEAPGMALLHIAYERLVTGIHNEDTIEQYHAHGRQLGRLLYQGRWFDPQALMLRDALQRWVASEITGEVTLELRRGNDYSILNTVSDNLTYKPERLTMEKGESVFSPDDRIGQLTMRNLDITDTREKLFNYVESGLISSGNAGLPQVANPLLQDKSAK.

It belongs to the argininosuccinate synthase family. Type 2 subfamily. In terms of assembly, homotetramer.

The protein localises to the cytoplasm. The enzyme catalyses L-citrulline + L-aspartate + ATP = 2-(N(omega)-L-arginino)succinate + AMP + diphosphate + H(+). It functions in the pathway amino-acid biosynthesis; L-arginine biosynthesis; L-arginine from L-ornithine and carbamoyl phosphate: step 2/3. In Dickeya chrysanthemi (Pectobacterium chrysanthemi), this protein is Argininosuccinate synthase (argG).